We begin with the raw amino-acid sequence, 263 residues long: Phosphoinositide-3-kinase-interacting protein 1 (263 aa).

The first 18 residues, 1 to 18 (MFGRLYFMLLLSVGLVDC), serve as a signal peptide directing secretion. Topologically, residues 19 to 163 (LSVVKDCITN…SGPKKKKDLG (145 aa)) are extracellular. In terms of domain architecture, Kringle spans 24 to 99 (DCITNNGEDY…KKEACDIRIC (76 aa)). 3 disulfides stabilise this stretch: Cys-25–Cys-99, Cys-46–Cys-80, and Cys-69–Cys-94. Asn-103 carries an N-linked (GlcNAc...) asparagine glycan. Residues 164-184 (TLGYVLAVFMMAIIILLGGGI) traverse the membrane as a helical segment. The Cytoplasmic segment spans residues 185-263 (TMGYFYKRGR…LMGSAGTPGA (79 aa)). The segment at 239–263 (NNQTPTQEPVEGADPLMGSAGTPGA) is disordered.

It is found in the cell membrane. Negative regulator of hepatic phosphatidylinositol 3-kinase (PI3K) activity. The chain is Phosphoinositide-3-kinase-interacting protein 1 (pik3ip1) from Danio rerio (Zebrafish).